A 119-amino-acid chain; its full sequence is Small ribosomal subunit protein bS6 (119 aa).

Residues 99-119 (KKEKKQSRKEEGSENSEKVEE) form a disordered region.

This sequence belongs to the bacterial ribosomal protein bS6 family.

Binds together with bS18 to 16S ribosomal RNA. The polypeptide is Small ribosomal subunit protein bS6 (Thermosipho melanesiensis (strain DSM 12029 / CIP 104789 / BI429)).